Consider the following 419-residue polypeptide: MIKLIRGFRDILPGQVELWQDIESKARVLLENFGFREIRLPIMESTELFARGIGADTDIVEKEMYTFPDSKGRGQTLRPEATASVVRSYIEHGYAGSDPVQKFYTIGPMFRHERPQKGRYRQFYQINAEMFGVASPLADVQIMYMLHLFFTGLDVPDVVTHVNSLGCPECRPKFREALISFVSDKMDRLCSDCQRRADANPLRVIDCKVPGCKEAVQGAPSIQDHLCPDCKEHFEAVIKGLDGLNVPYEIDPRLVRGLDYYTRTTFEVQTTLLGAQNAVAGGGRYDGLVKILGGKETPAIGFAVGFDRLAALLGAEEKDFTVPPALFIAALGDEARKIAFGWLCDFNARGVRAEMDYEGKSLKSQMKQANRFNAGRVLILGENELQNGMAVLRNMDTKEQEEVALDGLTDRVAALINQG.

It belongs to the class-II aminoacyl-tRNA synthetase family. In terms of assembly, homodimer.

The protein localises to the cytoplasm. The enzyme catalyses tRNA(His) + L-histidine + ATP = L-histidyl-tRNA(His) + AMP + diphosphate + H(+). This Desulfatibacillum aliphaticivorans protein is Histidine--tRNA ligase.